The sequence spans 80 residues: Cytochrome c-553 (80 aa).

Heme c is bound by residues cysteine 13, cysteine 16, histidine 17, and methionine 58.

Binds 1 heme c group covalently per subunit.

The protein resides in the periplasm. In terms of biological role, natural electron acceptor for a formate dehydrogenase. The polypeptide is Cytochrome c-553 (Desulfomicrobium norvegicum (strain DSM 1741 / NCIMB 8310) (Desulfovibrio baculatus (strain Norway 4))).